The primary structure comprises 54 residues: VATVDCSDYPKPACRMEYMPLCGSDNKTYGNKCNFCNAVVDSNGTLTLSHFGKC.

One can recognise a Kazal-like domain in the interval 4 to 54 (VDCSDYPKPACRMEYMPLCGSDNKTYGNKCNFCNAVVDSNGTLTLSHFGKC). Intrachain disulfides connect cysteine 6/cysteine 36, cysteine 14/cysteine 33, and cysteine 22/cysteine 54. An N-linked (GlcNAc...) asparagine glycan is attached at asparagine 43.

The protein resides in the secreted. This is Ovomucoid from Cereopsis novaehollandiae (Cape Barren goose).